The following is an 87-amino-acid chain: Keratin-associated protein 19-3 (87 aa).

The segment at 9–82 (GGLGYGYGSF…RRPSCCGGYG (74 aa)) is 23 X 2 AA repeats of G-[YCGS].

This sequence belongs to the KRTAP type 19 family. In terms of assembly, interacts with hair keratins. As to expression, strong expression in narrowly defined pattern restricted to the lower and middle cortical regions of the hair shaft in both developing and cycling hair. During hair follicle regression (catagen), expression levels decrease until expression is no longer detectable in follicles at resting stage (telogen).

In the hair cortex, hair keratin intermediate filaments are embedded in an interfilamentous matrix, consisting of hair keratin-associated proteins (KRTAP), which are essential for the formation of a rigid and resistant hair shaft through their extensive disulfide bond cross-linking with abundant cysteine residues of hair keratins. The matrix proteins include the high-sulfur and high-glycine-tyrosine keratins. This Mus musculus (Mouse) protein is Keratin-associated protein 19-3 (Krtap19-3).